The sequence spans 170 residues: Acireductone dioxygenase (170 aa).

H99, H101, E105, and H144 together coordinate Fe(2+). H99, H101, E105, and H144 together coordinate Ni(2+).

This sequence belongs to the acireductone dioxygenase (ARD) family. In terms of assembly, monomer. Fe(2+) serves as cofactor. It depends on Ni(2+) as a cofactor.

It catalyses the reaction 1,2-dihydroxy-5-(methylsulfanyl)pent-1-en-3-one + O2 = 3-(methylsulfanyl)propanoate + CO + formate + 2 H(+). The enzyme catalyses 1,2-dihydroxy-5-(methylsulfanyl)pent-1-en-3-one + O2 = 4-methylsulfanyl-2-oxobutanoate + formate + 2 H(+). It participates in amino-acid biosynthesis; L-methionine biosynthesis via salvage pathway; L-methionine from S-methyl-5-thio-alpha-D-ribose 1-phosphate: step 5/6. In terms of biological role, catalyzes 2 different reactions between oxygen and the acireductone 1,2-dihydroxy-3-keto-5-methylthiopentene (DHK-MTPene) depending upon the metal bound in the active site. Fe-containing acireductone dioxygenase (Fe-ARD) produces formate and 2-keto-4-methylthiobutyrate (KMTB), the alpha-ketoacid precursor of methionine in the methionine recycle pathway. Ni-containing acireductone dioxygenase (Ni-ARD) produces methylthiopropionate, carbon monoxide and formate, and does not lie on the methionine recycle pathway. The sequence is that of Acireductone dioxygenase from Bacillus thuringiensis (strain Al Hakam).